Consider the following 702-residue polypeptide: MIHTLETTVAGRKMKVDFGKTGMLSNAAIFMSYGDTVVMINANASKEPREGIDFFPLSVDYEERLYSVGKIPGGFIKREGKPSDKSILHARSIDRPLRPLFPNGYRNDVQIVNTVLSVEQDNLPEILAINGSSLALCLSSIPFTTPVAAVSVGLVDGEFIINPTVAQRENTILDLTVCATKERIMMVEAGGQEIDEETMYNAILFGFEECKNIVAFQEEAVAKLGKTKDEQVLYKADEEVEKEVKRFAFDMIKEAMYIMDKDERNAQLDKVKEKISEEFSQKYEDKGADIKEVIYKTQKEIVRNMLLNEDRRPDGRAFDEVRPIGCEVGILPRTHGTGLFTRGLTQVMTVATLGALGDVQILDGIAEEESKRYMHHYNFPSYSVGEVRPLRGPGRREIGHGALAERALEPLIPSQEEFPYTIRLVSEVLSSNGSTSQASVCGSTLALLDAGVPIKRPAAGIAMGLITSDDLEREKVITDIQGIEDFFGDMDFKVAGTEKGITSIQFDTKIKGLSNSCVKDALEGAKKARLHILGKIKECIPEPRKELSKYAPRTEIICIDPEKIRDVIGAGGKVINKIIADTNVKIEIKEDGKIFVTSNNEPEGVKKAISIIEGLTKEVVQGEIYLGKVTKTTNFGAFVEILPGKEGLVHISKLDFARVEKVEDVVSVGDEILVKVTDIDNQGRINLSRKDAIAKKEEEKDK.

Asp485 and Asp491 together coordinate Mg(2+). Positions 552–612 constitute a KH domain; it reads PRTEIICIDP…EGVKKAISII (61 aa). Residues 622–690 enclose the S1 motif domain; sequence GEIYLGKVTK…NQGRINLSRK (69 aa).

It belongs to the polyribonucleotide nucleotidyltransferase family. It depends on Mg(2+) as a cofactor.

The protein resides in the cytoplasm. It catalyses the reaction RNA(n+1) + phosphate = RNA(n) + a ribonucleoside 5'-diphosphate. Involved in mRNA degradation. Catalyzes the phosphorolysis of single-stranded polyribonucleotides processively in the 3'- to 5'-direction. The chain is Polyribonucleotide nucleotidyltransferase from Clostridium botulinum (strain Langeland / NCTC 10281 / Type F).